We begin with the raw amino-acid sequence, 170 residues long: Regulator of ribonuclease activity A (170 aa).

Belongs to the RraA family. Homotrimer. Binds to both RNA-binding sites in the C-terminal region of Rne and to RhlB.

The protein resides in the cytoplasm. Its function is as follows. Globally modulates RNA abundance by binding to RNase E (Rne) and regulating its endonucleolytic activity. Can modulate Rne action in a substrate-dependent manner by altering the composition of the degradosome. Modulates RNA-binding and helicase activities of the degradosome. The chain is Regulator of ribonuclease activity A from Psychromonas ingrahamii (strain DSM 17664 / CCUG 51855 / 37).